The following is a 369-amino-acid chain: 2-aminoethylphosphonate--pyruvate transaminase (369 aa).

Lys193 carries the N6-(pyridoxal phosphate)lysine modification.

This sequence belongs to the class-V pyridoxal-phosphate-dependent aminotransferase family. PhnW subfamily. As to quaternary structure, homodimer. It depends on pyridoxal 5'-phosphate as a cofactor.

The catalysed reaction is (2-aminoethyl)phosphonate + pyruvate = phosphonoacetaldehyde + L-alanine. Functionally, involved in phosphonate degradation. The polypeptide is 2-aminoethylphosphonate--pyruvate transaminase (Burkholderia pseudomallei (strain K96243)).